The sequence spans 228 residues: Probable septum site-determining protein MinC (228 aa).

Belongs to the MinC family. Interacts with MinD and FtsZ.

Its function is as follows. Cell division inhibitor that blocks the formation of polar Z ring septums. Rapidly oscillates between the poles of the cell to destabilize FtsZ filaments that have formed before they mature into polar Z rings. Prevents FtsZ polymerization. The protein is Probable septum site-determining protein MinC of Bacillus mycoides (strain KBAB4) (Bacillus weihenstephanensis).